A 112-amino-acid chain; its full sequence is Nitrogen regulatory protein GlnK2 (112 aa).

ADP is bound by residues T29, 37–39 (GVQ), V64, and 87–90 (GDGK). ATP-binding positions include T29, 37 to 39 (GVQ), V64, and 87 to 90 (GDGK).

The protein belongs to the P(II) protein family. In terms of assembly, homotrimer. Interacts and forms a complex with Amt2.

Its subcellular location is the cytoplasm. Functionally, involved in the regulation of nitrogen metabolism. Regulates the activity of its targets by protein-protein interaction in response to the nitrogen status of the cell. Regulates the activity of the ammonia channel Amt2 via direct interaction. In Methanocaldococcus jannaschii (strain ATCC 43067 / DSM 2661 / JAL-1 / JCM 10045 / NBRC 100440) (Methanococcus jannaschii), this protein is Nitrogen regulatory protein GlnK2.